The sequence spans 199 residues: Ribonuclease HII (199 aa).

The 188-residue stretch at 12 to 199 folds into the RNase H type-2 domain; it reads DLLAGTDEAG…FGPVKKILEG (188 aa). 3 residues coordinate a divalent metal cation: Asp18, Glu19, and Asp110.

The protein belongs to the RNase HII family. Mn(2+) is required as a cofactor. The cofactor is Mg(2+).

It localises to the cytoplasm. The enzyme catalyses Endonucleolytic cleavage to 5'-phosphomonoester.. In terms of biological role, endonuclease that specifically degrades the RNA of RNA-DNA hybrids. The chain is Ribonuclease HII from Marinomonas sp. (strain MWYL1).